Reading from the N-terminus, the 515-residue chain is Bifunctional purine biosynthesis protein PurH (515 aa).

Positions 1–145 constitute an MGS-like domain; sequence MTKRALISVS…KNHASVTVVV (145 aa).

It belongs to the PurH family.

The enzyme catalyses (6R)-10-formyltetrahydrofolate + 5-amino-1-(5-phospho-beta-D-ribosyl)imidazole-4-carboxamide = 5-formamido-1-(5-phospho-D-ribosyl)imidazole-4-carboxamide + (6S)-5,6,7,8-tetrahydrofolate. It carries out the reaction IMP + H2O = 5-formamido-1-(5-phospho-D-ribosyl)imidazole-4-carboxamide. The protein operates within purine metabolism; IMP biosynthesis via de novo pathway; 5-formamido-1-(5-phospho-D-ribosyl)imidazole-4-carboxamide from 5-amino-1-(5-phospho-D-ribosyl)imidazole-4-carboxamide (10-formyl THF route): step 1/1. Its pathway is purine metabolism; IMP biosynthesis via de novo pathway; IMP from 5-formamido-1-(5-phospho-D-ribosyl)imidazole-4-carboxamide: step 1/1. The protein is Bifunctional purine biosynthesis protein PurH of Streptococcus pyogenes serotype M18 (strain MGAS8232).